The sequence spans 370 residues: 3-dehydroquinate synthase (370 aa).

NAD(+) is bound by residues 108–112 (GVIGD), 132–133 (TT), Lys145, and Lys154. 3 residues coordinate Zn(2+): Glu187, His249, and His267.

This sequence belongs to the sugar phosphate cyclases superfamily. Dehydroquinate synthase family. The cofactor is Co(2+). It depends on Zn(2+) as a cofactor. NAD(+) is required as a cofactor.

Its subcellular location is the cytoplasm. The catalysed reaction is 7-phospho-2-dehydro-3-deoxy-D-arabino-heptonate = 3-dehydroquinate + phosphate. It participates in metabolic intermediate biosynthesis; chorismate biosynthesis; chorismate from D-erythrose 4-phosphate and phosphoenolpyruvate: step 2/7. In terms of biological role, catalyzes the conversion of 3-deoxy-D-arabino-heptulosonate 7-phosphate (DAHP) to dehydroquinate (DHQ). The protein is 3-dehydroquinate synthase of Cereibacter sphaeroides (strain ATCC 17023 / DSM 158 / JCM 6121 / CCUG 31486 / LMG 2827 / NBRC 12203 / NCIMB 8253 / ATH 2.4.1.) (Rhodobacter sphaeroides).